The chain runs to 57 residues: Mambaquaretin-7 (57 aa).

One can recognise a BPTI/Kunitz inhibitor domain in the interval 5-55 (CELIVAAGPCMFFISAFYYSKGANKCYPFTYSGCRGNANRFKTIEECRRTC). 3 cysteine pairs are disulfide-bonded: Cys5-Cys55, Cys14-Cys38, and Cys30-Cys51.

This sequence belongs to the venom Kunitz-type family. In terms of tissue distribution, expressed by the venom gland.

The protein resides in the secreted. Functionally, the mixture of mambaquaretin-7 and mambaquaretin-8 interacts with vasopressin V2 receptor (V2R/AVPR2), probably in a selective manner. This mixture inhibits vasopressin binding human V2R in the nanomolar range (Ki=3.14 nM), and also potently inhibits vasopressin-induced cAMP production (IC(50)=58 nM). In vivo, intraperitoneal injection of this protein into rats increases diuresis, without any loss of electrolytes. The chain is Mambaquaretin-7 from Dendroaspis polylepis polylepis (Black mamba).